The following is a 464-amino-acid chain: RCC1-like G exchanging factor-like protein (464 aa).

Residues 1-37 (MALVALVAGARLGRRLSGPGLGRGHWTAAGRSRSRRE) constitute a mitochondrion transit peptide. RCC1 repeat units lie at residues 58–124 (ADRV…LSSK), 128–191 (VTKV…VLTD), 193–247 (EGVF…FLTD), 248–300 (KGEV…AVSA), 302–353 (GGLF…VLNG), 354–411 (EGHV…ALTN), and 412–461 (KGEL…TLAK).

In terms of assembly, forms a regulatory protein-RNA complex, consisting of RCC1L, NGRN, RPUSD3, RPUSD4, TRUB2, FASTKD2 and 16S mt-rRNA. Interacts with 16S mt-rRNA; this interaction is direct. Interacts with OPA1; this interaction is direct. As to quaternary structure, asociates with the mitochondrial ribosome large subunit (mt-LSU). Asociates with the mitochondrial ribosome small subunit (mt-SSU). As to expression, ubiquitous.

It localises to the mitochondrion membrane. Its subcellular location is the mitochondrion inner membrane. Guanine nucleotide exchange factor (GEF) for mitochondrial dynamin-related GTPase OPA1. Activates OPA1, by exchanging bound GDP for free GTP, and drives OPA1 and MFN1-dependent mitochondrial fusion. Plays an essential role in mitochondrial ribosome biogenesis. As a component of a functional protein-RNA module, consisting of RCC1L, NGRN, RPUSD3, RPUSD4, TRUB2, FASTKD2 and 16S mitochondrial ribosomal RNA (16S mt-rRNA), controls 16S mt-rRNA abundance and is required for intra-mitochondrial translation of core subunits of the oxidative phosphorylation system. Its function is as follows. Plays an essential role in mitochondrial ribosome biogenesis via its association with GTPases that play a role in the assembly of the large ribosome subunit. Functionally, plays an essential role in mitochondrial ribosome biogenesis via its association with GTPases that play a role in the assembly of the small ribosome subunit. In Homo sapiens (Human), this protein is RCC1-like G exchanging factor-like protein.